The following is a 215-amino-acid chain: Small ribosomal subunit protein uS5 (215 aa).

The segment covering 1–11 (MTDSSPQSNPN) has biased composition (polar residues). The disordered stretch occupies residues 1–61 (MTDSSPQSNP…GQDRDSEWQE (61 aa)). Residues 12-28 (AVPGAADVPAAAQGQQQ) are compositionally biased toward low complexity. The span at 39 to 61 (RGDRRGDRRGGRRGQDRDSEWQE) shows a compositional bias: basic and acidic residues. The S5 DRBM domain maps to 59 to 122 (WQERVVQIRR…ADGKKHLVKV (64 aa)).

It belongs to the universal ribosomal protein uS5 family. As to quaternary structure, part of the 30S ribosomal subunit. Contacts proteins S4 and S8.

Functionally, with S4 and S12 plays an important role in translational accuracy. Its function is as follows. Located at the back of the 30S subunit body where it stabilizes the conformation of the head with respect to the body. This Synechococcus sp. (strain CC9902) protein is Small ribosomal subunit protein uS5.